Reading from the N-terminus, the 81-residue chain is MSHSVKVYDTCIGCTQCVRACPCDVLEMVAWDGCKAGQIASAPRTEDCIGCKRCETACPTDFLSVRVYLGGETTRSMGLAY.

4Fe-4S ferredoxin-type domains follow at residues 2 to 31 (SHSV…MVAW) and 39 to 68 (IASA…VRVY). Residues cysteine 11, cysteine 14, cysteine 17, cysteine 21, cysteine 48, cysteine 51, cysteine 54, and cysteine 58 each coordinate [4Fe-4S] cluster.

As to quaternary structure, the eukaryotic PSI reaction center is composed of at least 11 subunits. [4Fe-4S] cluster is required as a cofactor.

It is found in the plastid. The protein resides in the chloroplast thylakoid membrane. It catalyses the reaction reduced [plastocyanin] + hnu + oxidized [2Fe-2S]-[ferredoxin] = oxidized [plastocyanin] + reduced [2Fe-2S]-[ferredoxin]. Functionally, apoprotein for the two 4Fe-4S centers FA and FB of photosystem I (PSI); essential for photochemical activity. FB is the terminal electron acceptor of PSI, donating electrons to ferredoxin. The C-terminus interacts with PsaA/B/D and helps assemble the protein into the PSI complex. Required for binding of PsaD and PsaE to PSI. PSI is a plastocyanin/cytochrome c6-ferredoxin oxidoreductase, converting photonic excitation into a charge separation, which transfers an electron from the donor P700 chlorophyll pair to the spectroscopically characterized acceptors A0, A1, FX, FA and FB in turn. The polypeptide is Photosystem I iron-sulfur center (Guillardia theta (Cryptophyte)).